The following is a 155-amino-acid chain: Phosphopantetheine adenylyltransferase (155 aa).

It belongs to the eukaryotic CoaD family.

Its subcellular location is the cytoplasm. The catalysed reaction is (R)-4'-phosphopantetheine + ATP + H(+) = 3'-dephospho-CoA + diphosphate. It participates in cofactor biosynthesis; coenzyme A biosynthesis. Functionally, reversibly transfers an adenylyl group from ATP to 4'-phosphopantetheine, yielding dephospho-CoA (dPCoA) and pyrophosphate. The sequence is that of Phosphopantetheine adenylyltransferase from Pyrobaculum aerophilum (strain ATCC 51768 / DSM 7523 / JCM 9630 / CIP 104966 / NBRC 100827 / IM2).